The primary structure comprises 345 residues: UPF0324 membrane protein Cgl0015/cg0018 (345 aa).

A run of 10 helical transmembrane segments spans residues 15–37, 44–66, 81–103, 105–124, 134–156, 163–185, 205–227, 261–280, 285–307, and 320–342; these read LRTG…VLIA, FSGV…LIQL, LLRL…SLGF, MLAV…ILMG, VLLI…EGVT, VVTA…PFAT, EIAQ…AVVV, VVPL…STVA, VIAA…LGCG, and PFIL…TLLT.

The protein belongs to the UPF0324 family.

The protein resides in the cell membrane. This is UPF0324 membrane protein Cgl0015/cg0018 from Corynebacterium glutamicum (strain ATCC 13032 / DSM 20300 / JCM 1318 / BCRC 11384 / CCUG 27702 / LMG 3730 / NBRC 12168 / NCIMB 10025 / NRRL B-2784 / 534).